The primary structure comprises 51 residues: Large ribosomal subunit protein eL39 (51 aa).

Positions 32-51 are disordered; sequence KGSVKQHPKMRHWRRKNLKK. Residues 33 to 51 show a composition bias toward basic residues; it reads GSVKQHPKMRHWRRKNLKK.

The protein belongs to the eukaryotic ribosomal protein eL39 family.

In Methanococcus maripaludis (strain C5 / ATCC BAA-1333), this protein is Large ribosomal subunit protein eL39.